The primary structure comprises 274 residues: Large ribosomal subunit protein uL2cz/uL2cy (274 aa).

2 disordered regions span residues 1–23 and 223–274; these read MAIHLYKTSTPSTRNGTVGSQVK and MNPV…RRSK. Residues 7–23 are compositionally biased toward polar residues; it reads KTSTPSTRNGTVGSQVK.

This sequence belongs to the universal ribosomal protein uL2 family. Part of the 50S ribosomal subunit.

The protein resides in the plastid. It localises to the chloroplast. In Nandina domestica (Heavenly bamboo), this protein is Large ribosomal subunit protein uL2cz/uL2cy (rpl2-A).